Here is a 297-residue protein sequence, read N- to C-terminus: Homoserine kinase (297 aa).

ATP is bound at residue 82–92 (PVSRGLGSSAA).

It belongs to the GHMP kinase family. Homoserine kinase subfamily.

The protein resides in the cytoplasm. The catalysed reaction is L-homoserine + ATP = O-phospho-L-homoserine + ADP + H(+). It functions in the pathway amino-acid biosynthesis; L-threonine biosynthesis; L-threonine from L-aspartate: step 4/5. Functionally, catalyzes the ATP-dependent phosphorylation of L-homoserine to L-homoserine phosphate. This chain is Homoserine kinase, found in Clostridium botulinum (strain Loch Maree / Type A3).